Reading from the N-terminus, the 737-residue chain is MLKKILPVLITLAIVHNTPTAWAAEAPKTDSFYLPKSLDLSPLRLHNIESNPYGKDFNYAQQFKTLDLEAVKKDIKTVLTTSQDWWPADYGNYGPFFIRMAWHGAGTYRIYDGRGGADGGQQRFEPLNSWPDNANLDKARRLLWPIKKKYGAKISWGDLMVLTGNVALESMGFKTLGFAGGREDDWQSDLVYWGAGNKMLSDNRDKNGKLPKPLAATQMGLIYVNPEGPNGKPDPVAAAKDIREAFARMAMNDEETVALIAGGHTFGKAHGAASPEKCLGAAPGEAGLEQQGLGWANKCGSGNGKDTITSGLEGAWTTDPTHFTMQYLSNLYKHEWVLTKSPAGAWQWKPKNAANVVPDATDPTKFHPLMMFTTDIALKVDPEYKKITTRFLENPEEFKMAFARAWFKLTHRDMGPAARYLGDEVPKETFIWQDPLPAANYKMIDSADISELKDKILKTGLSDTKLIKTAWASASTFRGTDFRGGDNGARIRLAPQKDWPVNDPAELHSVLAALMEVQNNFNKDRSDGKKVSLSDLIVLGGNAAIEDAAKKAGYSISIPFTPGRTDASQEETDVSSFAVLEPTADGFRNYYDAKRNTLSPIASLIDRANKLELTVPEMTVLIGGLRVLDVNSGGSKAGVLTNTPGQLNNNFFVNLLDMSTKWTKSPKAEGYFDGYDRKTGKLKWTASSVDLVFGSNPELRAVAEVYASDDAKEKFVHDFTKVWEKVMNLDRFDIKNN.

The N-terminal stretch at 1-23 is a signal peptide; it reads MLKKILPVLITLAIVHNTPTAWA. Residues 102–223 constitute a cross-link (tryptophyl-tyrosyl-methioninium (Trp-Tyr) (with M-249)); it reads WHGAGTYRIY…LAATQMGLIY (122 aa). H103 (proton acceptor) is an active-site residue. The segment at residues 223-249 is a cross-link (tryptophyl-tyrosyl-methioninium (Tyr-Met) (with W-102)); sequence YVNPEGPNGKPDPVAAAKDIREAFARM. A heme b-binding site is contributed by H264.

The protein belongs to the peroxidase family. Peroxidase/catalase subfamily. As to quaternary structure, homodimer or homotetramer. The cofactor is heme b. In terms of processing, formation of the three residue Trp-Tyr-Met cross-link is important for the catalase, but not the peroxidase activity of the enzyme.

It carries out the reaction H2O2 + AH2 = A + 2 H2O. The enzyme catalyses 2 H2O2 = O2 + 2 H2O. Its function is as follows. Bifunctional enzyme with both catalase and broad-spectrum peroxidase activity. The protein is Catalase-peroxidase of Yersinia pseudotuberculosis serotype I (strain IP32953).